The chain runs to 248 residues: Probable transcriptional regulatory protein LAR_0538 (248 aa).

The tract at residues 1–22 (MSGHSKWHNIQGRKNAQDAKRG) is disordered.

It belongs to the TACO1 family.

It is found in the cytoplasm. This Limosilactobacillus reuteri subsp. reuteri (strain JCM 1112) (Lactobacillus reuteri) protein is Probable transcriptional regulatory protein LAR_0538.